Reading from the N-terminus, the 197-residue chain is Segregation and condensation protein B (197 aa).

Belongs to the ScpB family. Homodimer. Homodimerization may be required to stabilize the binding of ScpA to the Smc head domains. Component of a cohesin-like complex composed of ScpA, ScpB and the Smc homodimer, in which ScpA and ScpB bind to the head domain of Smc. The presence of the three proteins is required for the association of the complex with DNA.

Its subcellular location is the cytoplasm. Functionally, participates in chromosomal partition during cell division. May act via the formation of a condensin-like complex containing Smc and ScpA that pull DNA away from mid-cell into both cell halves. The sequence is that of Segregation and condensation protein B from Bacillus licheniformis (strain ATCC 14580 / DSM 13 / JCM 2505 / CCUG 7422 / NBRC 12200 / NCIMB 9375 / NCTC 10341 / NRRL NRS-1264 / Gibson 46).